A 143-amino-acid polypeptide reads, in one-letter code: Putative cytokinin riboside 5'-monophosphate phosphoribohydrolase LOG9 (143 aa).

Substrate contacts are provided by residues 23–24 (RK), 41–47 (RYETMEE), and Thr-53.

This sequence belongs to the LOG family.

It carries out the reaction N(6)-(dimethylallyl)adenosine 5'-phosphate + H2O = N(6)-dimethylallyladenine + D-ribose 5-phosphate. The enzyme catalyses 9-ribosyl-trans-zeatin 5'-phosphate + H2O = trans-zeatin + D-ribose 5-phosphate. Cytokinin-activating enzyme working in the direct activation pathway. Phosphoribohydrolase that converts inactive cytokinin nucleotides to the biologically active free-base forms. The sequence is that of Putative cytokinin riboside 5'-monophosphate phosphoribohydrolase LOG9 (LOG9) from Arabidopsis thaliana (Mouse-ear cress).